The sequence spans 197 residues: FMN-dependent NADH:quinone oxidoreductase (197 aa).

FMN is bound by residues Ser-10, Ser-16–Ser-18, and Met-96–Phe-99.

The protein belongs to the azoreductase type 1 family. Homodimer. Requires FMN as cofactor.

It carries out the reaction 2 a quinone + NADH + H(+) = 2 a 1,4-benzosemiquinone + NAD(+). It catalyses the reaction N,N-dimethyl-1,4-phenylenediamine + anthranilate + 2 NAD(+) = 2-(4-dimethylaminophenyl)diazenylbenzoate + 2 NADH + 2 H(+). In terms of biological role, quinone reductase that provides resistance to thiol-specific stress caused by electrophilic quinones. Functionally, also exhibits azoreductase activity. Catalyzes the reductive cleavage of the azo bond in aromatic azo compounds to the corresponding amines. This Marinomonas sp. (strain MWYL1) protein is FMN-dependent NADH:quinone oxidoreductase.